We begin with the raw amino-acid sequence, 248 residues long: Probable transcriptional regulatory protein BH14810 (248 aa).

Belongs to the TACO1 family.

The protein localises to the cytoplasm. The protein is Probable transcriptional regulatory protein BH14810 of Bartonella henselae (strain ATCC 49882 / DSM 28221 / CCUG 30454 / Houston 1) (Rochalimaea henselae).